Here is a 772-residue protein sequence, read N- to C-terminus: Serine/threonine-protein kinase tousled-like 2 (772 aa).

The tract at residues 24-126 (GVSKGPLNSE…SNPLPRRVEQ (103 aa)) is disordered. Polar residues predominate over residues 29 to 44 (PLNSESSNQSLCSVGS). The segment covering 46–61 (SDKEVETPEKKQNDQR) has biased composition (basic and acidic residues). Residues S73, S94, S99, S115, S117, and S134 each carry the phosphoserine modification. The interval 180–208 (QNSPSSTGSGNTEHSCSSQKQISIQHRQT) is disordered. Positions 225-276 (NSDLEKKEGRIDDLLRANCDLRRQIDEQQKMLEKYKERLNRCVTMSKKLLIE) are required for interaction with TLK1 and DYNLL1/LC8. 2 coiled-coil regions span residues 225–276 (NSDL…LLIE) and 317–347 (AFQN…KRKP). The tract at residues 342 to 385 (LAKRKPPAMGQAPPATNEQKQRKSKTNGAENETPSSGNTELKDT) is disordered. A compositionally biased stretch (polar residues) spans 367-380 (TNGAENETPSSGNT). Positions 403–451 (HEQEEIFKLRLGHLKKEEAEIQAELERLERVRNLHIRELKRIHNEDNSQ) form a coiled coil. A Protein kinase domain is found at 462–741 (YLLLHLLGRG…VQQLACDPYL (280 aa)). ATP is bound by residues 468–476 (LGRGGFSEV) and K491. D592 serves as the catalytic Proton acceptor. At S750 the chain carries Phosphoserine; by CHEK1.

Belongs to the protein kinase superfamily. Ser/Thr protein kinase family. Monomer. May form homodimers; homodimerization may enhance autophosphoylation and enzymatic activity. Heterodimer with TLK1. Interacts with YWHAZ; association with 14-3-3 proteins such as YWHAZ regulates subcellular location. May also interact with FEZ1/LZTS1 and FEZ2. Interacts with CHD7 and CHD8. Interacts with DYNLL1/LC8. Mg(2+) is required as a cofactor. Post-translationally, phosphorylated at Ser-750, probably by CHEK1. Autophosphorylated; phosphorylation promotes the assembly of higher order oligomers and enzymatic activity. As to expression, detected in placenta, fetal liver, kidney, pancreas, heart and skeletal muscle. Highly expressed in testis. Detected in spleen, thymus, colon, ovary, small intestine, prostate and peripheral blood leukocytes. Almost undetectable in liver and lung.

It localises to the nucleus. Its subcellular location is the nucleoplasm. The protein localises to the cytoplasm. It is found in the perinuclear region. The protein resides in the cytoskeleton. The enzyme catalyses L-seryl-[protein] + ATP = O-phospho-L-seryl-[protein] + ADP + H(+). It catalyses the reaction L-threonyl-[protein] + ATP = O-phospho-L-threonyl-[protein] + ADP + H(+). Cell cycle-regulated, with maximal activity in the S-phase. Rapidly and transiently inhibited by phosphorylation following the generation of DNA double-stranded breaks during S-phase, probably by CHEK1, possibly at Ser-750. This inhibition is cell cycle checkpoint- and ATM-dependent. Functionally, serine/threonine-protein kinase involved in the process of chromatin assembly and probably also DNA replication, transcription, repair, and chromosome segregation. Phosphorylates the chromatin assembly factors ASF1A and ASF1B. Phosphorylation of ASF1A prevents its proteasome-mediated degradation, thereby enhancing chromatin assembly. Negative regulator of amino acid starvation-induced autophagy. This Homo sapiens (Human) protein is Serine/threonine-protein kinase tousled-like 2.